The sequence spans 1062 residues: MILENSDKLKDWLSVVLEPLCDADSSALARYVIALLKKDKSDKDLKRIMIEQLDVFLSEETTRFVERLFDAIASEEYLTVPAAPLITASSASTAELTVDQELALVIDGPQDDIEAVLVADSPPPPPKDNVIKPDSNQVKLEQASQDAREAEALAFISQEAGIAMHVPTDAKPAFDHKTKDSHNQQSASNYQHHHVRSASPPGRSSGVSGSGGGGPGGAGLAAGYADKENQPRDSRRRRASLRSRSRSRSRSNERAFRRSRSRDRRVNEREKTQRQFRNKSPPGSQTDNRHHGRRNFDRRRIGGNADDRPRFGNNKSRRSHSRSMSPERNARRNQNSPDRVQTAQANLIPAPVAPPAPVEHPASHPRQRCRDFDEKGYCVRGETCPWDHGVNPVVFEGINNTSLMMSMREYNPDAPEIWARSGGPPPGAGQGPVPPPTQPGQTTINPFSGNVRPTTLMSGSGPSPMGVPNPADYARNPGAPPQAAMMPFPFNPTAVTTPLQRQLIPIPVVDGAPTGGVAEVGKRRFELEDTVAIADVPTKRKVPINSRLGPRVNPNMQQHNSSLELRKVPRGLNTIAHLNNHFAKFGKIVNIQVSYEGDPEAAIVTFSTHAEANVAYRSTEAVLNNRFIKVFWHNDSSGADVGQMNQMGGGGGGGGRKNASQYHLHNVPAVPTPNADGAKISNANPLTEAGAGNIGTPATEQANTAAPASMRLKLNTTTAGGSAGGAAGAGAPGSGRPLNPAANAASIRKKQEEQQKAVHQLANGLRKRKQELLQSYMKQMKTALELVERMDQQDPQRAPTLQTIKVLQMTIDKLRKEIKADQDQLQAQMQQQQQQQQPPVKKTKEQQKKELLDMELELIAQQQEGNDTTAIQKRLEELQRNLGVGSAANNKSTHYAPASGAPGGGAGRKRPNLPEGPTRVDRRPKAIVVTGFAAEEADFVLGHFKNFGEISKHDVDREIPQLILSYATRLNAEQAVLRGKMYKDKRLQISWAPVVTPAPAPMAAPVEKSAAPGDMSVSLENPKQLIQSVSESESLLGSDTLPELRLEDEEEDEESEDRSWRR.

One can recognise a PWI domain in the interval aspartate 7–glutamate 75. Disordered stretches follow at residues alanine 119–glutamine 145 and lysine 171–valine 340. Residues aspartate 134–glutamine 145 are compositionally biased toward polar residues. A compositionally biased stretch (basic and acidic residues) spans proline 172–histidine 182. Residues serine 197–valine 207 are compositionally biased toward low complexity. Residues serine 208–leucine 220 show a composition bias toward gly residues. Residues serine 234–serine 249 show a composition bias toward basic residues. Basic and acidic residues-rich tracts occupy residues arginine 264–glutamine 273 and arginine 294–arginine 310. The span at arginine 322–valine 340 shows a compositional bias: polar residues. The segment at serine 363–asparagine 391 adopts a C3H1-type zinc-finger fold. The segment at glutamate 416–serine 463 is disordered. The segment covering glycine 423–glutamine 438 has biased composition (pro residues). Positions isoleucine 444–glycine 461 are enriched in polar residues. Positions serine 561–aspartate 635 constitute an RRM domain. Disordered regions lie at residues asparagine 666–threonine 704, threonine 716–alanine 741, glutamine 822–glutamine 847, serine 886–valine 920, and alanine 1004–arginine 1062. Over residues glycine 721 to glycine 733 the composition is skewed to gly residues. Residues aspartate 823–valine 840 are compositionally biased toward low complexity. Positions serine 1018–glycine 1037 are enriched in polar residues. Over residues leucine 1046 to glutamate 1056 the composition is skewed to acidic residues.

It localises to the nucleus. Its function is as follows. Negatively regulates Hedgehog (hh) protein signal in wing development. Regulates neural-specific glycosylation by binding to FucTA mRNA and facilitating its nuclear export in neural cells. The polypeptide is Zinc finger protein swm (Drosophila melanogaster (Fruit fly)).